A 1219-amino-acid polypeptide reads, in one-letter code: FK506-binding protein 15 (1219 aa).

The residue at position 1 (M1) is an N-acetylmethionine. 2 positions are modified to phosphoserine: S14 and S23. The tract at residues 41-66 (YTAPKQPKKGQGTAATGNQATPKTAP) is disordered. Residues 53-66 (TAATGNQATPKTAP) show a composition bias toward polar residues. The important for function in growth cone organization stretch occupies residues 72–169 (PTILVATAVH…AVEFNKQVCI (98 aa)). Residue K92 is modified to N6-acetyllysine. Residues 197–290 (GDSLEVAYTG…VFEVEVRRVK (94 aa)) enclose the PPIase FKBP-type domain. Residues 294 to 349 (DSGSDGHSVSSRDSAAPSPIPGADNLSADPVVSPPTSIPFKSGEPALRTKSNSLSE) form a disordered region. S307, S311, S326, S344, S346, and S356 each carry phosphoserine. A disordered region spans residues 381–433 (PQLDSNDSEIEDVNTLQGGGQPVVTPSVQPSLHPAHPALPQMTSQAPQPSVTG). Residues 421–433 (QMTSQAPQPSVTG) show a composition bias toward polar residues. Coiled coils occupy residues 522–789 (AVSK…TDQA), 818–878 (DEHL…GVEA), and 925–951 (TLQL…AEER). S619 bears the Phosphoserine mark. The tract at residues 739 to 761 (LEKNLSERKKKSAQERSQAEEEI) is disordered. Positions 931–1219 (QQEQEKEESS…DDDDDIDWLG (289 aa)) are disordered. S939, S940, S941, and S956 each carry phosphoserine. Residues 957–971 (QEQSASASSGQPQAP) are compositionally biased toward low complexity. 6 positions are modified to phosphoserine: S979, S1024, S1056, S1061, S1065, and S1097. Residues 1090-1100 (QESSTRLSLTS) show a composition bias toward polar residues. Position 1099 is a phosphothreonine (T1099). The residue at position 1114 (S1114) is a Phosphoserine. Positions 1123 to 1139 (LKKDDVTSSTGPHKELS) are enriched in basic and acidic residues. A phosphoserine mark is found at S1158, S1161, S1162, S1164, and S1195. T1203 is modified (phosphothreonine). Positions 1207 to 1219 (GDDDDDDDIDWLG) are enriched in acidic residues.

This sequence belongs to the FKBP-type PPIase family. In terms of assembly, interacts with WIP and actin. Interacts with TBC1D23.

The protein localises to the cytoplasm. It is found in the cell projection. The protein resides in the axon. It localises to the early endosome. Its function is as follows. May be involved in the cytoskeletal organization of neuronal growth cones. Seems to be inactive as a PPIase. Involved in the transport of early endosomes at the level of transition between microfilament-based and microtubule-based movement. This Homo sapiens (Human) protein is FK506-binding protein 15 (FKBP15).